The sequence spans 404 residues: Zinc finger CCCH domain-containing protein 3 (404 aa).

C3H1-type zinc fingers lie at residues 47–75 (RPGE…HPTH), 90–118 (RIGQ…HPKD), 135–163 (RLGE…HPQP), 261–289 (SSDQ…HPGV), and 307–335 (RPGQ…HPML). The span at 350–374 (FASPVTTHQRISPTPNRSDSKSLSN) shows a compositional bias: polar residues. Residues 350-404 (FASPVTTHQRISPTPNRSDSKSLSNGKPDVKKESSETEKPDNGEVQDLSEDASSP) form a disordered region. A compositionally biased stretch (basic and acidic residues) spans 377-391 (PDVKKESSETEKPDN).

The protein resides in the nucleus. Possesses RNA-binding and ribonuclease activities in vitro. The chain is Zinc finger CCCH domain-containing protein 3 from Arabidopsis thaliana (Mouse-ear cress).